The chain runs to 2345 residues: Nonribisomal peptide synthetase malG (2345 aa).

The segment at 226–620 (FSEQAKKNPT…VGRMGTVVKV (395 aa)) is adenylation 1. Residues 766 to 839 (TENETLLRLL…EAAGTMISAG (74 aa)) enclose the Carrier 1 domain. S800 is subject to O-(pantetheine 4'-phosphoryl)serine. The tract at residues 877–1292 (EEIYPSTPLQ…LLCPSDKSKL (416 aa)) is condensation 1. Residues 1317–1707 (VRSERTAVSA…GRKNREVKLR (391 aa)) form an adenylation 2 region. Residues 1843 to 1926 (QPHESTALFV…DIARLIEGVK (84 aa)) enclose the Carrier 2 domain. Residue S1885 is modified to O-(pantetheine 4'-phosphoryl)serine. Residues 1969–2256 (GMSVFLTGGT…PRQLNALQSE (288 aa)) are reductase (R) domain.

This sequence belongs to the NRP synthetase family.

The catalysed reaction is L-proline + L-tryptophan + 2 ATP + NADPH = (S)-3-(indol-3-ylmethyl)-6,7,8,8a-tetrahydropyrrolo[1,2-a]pyrazin-1-one + 2 AMP + 2 diphosphate + NADP(+) + H2O + H(+). In terms of biological role, nonribisomal peptide synthetase; part of the gene cluster that mediates the biosynthesis of malbrancheamide, a dichlorinated fungal indole alkaloid that belongs to a family of natural products containing a characteristic bicyclo[2.2.2]diazaoctane core. The first step of malbrancheamide biosynthesis involves coupling of L-proline and L-tryptophan by malG, a bimodular NRPS, to produce L-Pro-L-Trp aldehyde through reductive offloading. This compound undergoes spontaneous cyclization and dehydration to give a dienamine which is reverse prenylated at C-2 by malE. The other prenyltransferase present in the cluster, malB, displays modest activity, suggesting that may be a redundant gene in the pathway. Subsequently, a [4+2] Diels-Alder cyclo-addition catalyzed by the bifunctional enzyme malC forms the characteristic bicyclo[2.2.2]diazaoctane ring of premalbrancheamid. Finally, the flavin-dependent halogenase malA catalyzes the iterative dichlorination of the indole ring of premalbrancheamide to yield C-9 monochlorinated malbrancheamide B, C-8 monochlorinated isomalbrancheamide B, and dichlorinated malbrancheamide. MalA is also able to brominate premalbrancheamide at C-9 to yield malbrancheamide C, and, to a lesser extend, at C-8 to yield isomalbrancheamide C. Finally, malA can brominate C-9 monochlorinated malbrancheamide B at C-8 to yield malbrancheamide D, or C-8 monochlorinated isomalbrancheamide B at C-9 to produce isomalbrancheamide D. The sequence is that of Nonribisomal peptide synthetase malG from Malbranchea aurantiaca.